We begin with the raw amino-acid sequence, 95 residues long: Alpha-conotoxin-like Ms20.4 (95 aa).

The signal sequence occupies residues 1 to 24 (MPKLAVVLLVLLILPLSYFDVAGG). The propeptide occupies 25-45 (QAAEGDRRGNGLARYPQRGGR). At glutamate 50 the chain carries 4-carboxyglutamate. Residue proline 56 is modified to 4-hydroxyproline. Intrachain disulfides connect cysteine 64–cysteine 73, cysteine 69–cysteine 81, cysteine 74–cysteine 91, and cysteine 79–cysteine 93.

Belongs to the conotoxin D superfamily. Hetero-, homo- or pseudo-homodimer (identical sequence, different post-translational modifications). Heterodimer of [carboxy'Glu-48', hydroxy'Pro-54']Ms20.1 and [carboxyGlu-50, hydroxyPro-56]Ms20.4 may exist. In terms of tissue distribution, expressed by the venom duct.

It localises to the secreted. Alpha-conotoxins act on postsynaptic membranes, they bind to the nicotinic acetylcholine receptors (nAChR) and thus inhibit them. Through its two C-terminal domains, this homodimeric protein would bind to two nAChR allosteric sites, located outside the nAChR C-loop of the principal binding face and at the adjacent binding interface in a clockwise direction. This toxin specifically blocks mammalian neuronal nAChR of the alpha-7/CHRNA7, alpha-3-beta-2/CHRNA3-CHRNB2 and alpha-4-beta-2/CHRNA4-CHRNB2 subtypes. The chain is Alpha-conotoxin-like Ms20.4 from Conus mustelinus (Weasel cone).